Consider the following 692-residue polypeptide: Sulfhydryl oxidase 2 (692 aa).

Positions 1 to 38 (MAAARAVARDPGAYARQPPSLRAARLPRLLFLLAVVAA) are cleaved as a signal peptide. Positions 54-172 (SDAVWLLDSG…RQTMIDFLQN (119 aa)) constitute a Thioredoxin domain. An N-linked (GlcNAc...) asparagine glycan is attached at N71. Active-site nucleophile residues include C85 and C88. 2 disulfides stabilise this stretch: C85–C88 and C116–C125. Residues N172, N212, and N260 are each glycosylated (N-linked (GlcNAc...) asparagine). A disulfide bridge connects residues C412 and C424. Residues 415–524 (SRLELRGYPC…EDPKFPKVPW (110 aa)) form the ERV/ALR sulfhydryl oxidase domain. FAD contacts are provided by residues R420, W427, H431, E472, H476, 499-506 (WRKHNMVN), K521, and W524. An intrachain disulfide couples C470 to C473. C530 and C533 are oxidised to a cystine. The segment at 568–607 (DQGSPGEWEAQGREQEEGKGLNPSGKSWRHHDTGSLRPPH) is disordered. The span at 577–586 (AQGREQEEGK) shows a compositional bias: basic and acidic residues. The chain crosses the membrane as a helical span at residues 656-676 (SLCVVLYVASSLFLMIMYFFF).

It belongs to the quiescin-sulfhydryl oxidase (QSOX) family. FAD serves as cofactor.

Its subcellular location is the membrane. It catalyses the reaction 2 R'C(R)SH + O2 = R'C(R)S-S(R)CR' + H2O2. Functionally, catalyzes the oxidation of sulfhydryl groups in peptide and protein thiols to disulfides with the reduction of oxygen to hydrogen peroxide. May contribute to disulfide bond formation in a variety of secreted proteins. This chain is Sulfhydryl oxidase 2 (Qsox2), found in Mus musculus (Mouse).